The primary structure comprises 130 residues: Small ribosomal subunit protein uS9 (130 aa).

The protein belongs to the universal ribosomal protein uS9 family.

This is Small ribosomal subunit protein uS9 from Colwellia psychrerythraea (strain 34H / ATCC BAA-681) (Vibrio psychroerythus).